A 62-amino-acid polypeptide reads, in one-letter code: Conotoxin Qc5.1 (62 aa).

The N-terminal stretch at 1 to 22 (MRCVPVFIILLLLSPSAPSVDA) is a signal peptide. Positions 23 to 48 (HPMTKDDVPQASFHDDAKRTLQVPWM) are excised as a propeptide. V60 is subject to Valine amide.

It belongs to the conotoxin T superfamily. Post-translationally, contains 2 disulfide bonds that can be either 'C1-C3, C2-C4' or 'C1-C4, C2-C3', since these disulfide connectivities have been observed for conotoxins with cysteine framework V (for examples, see AC P0DQQ7 and AC P81755). Expressed by the venom duct.

Its subcellular location is the secreted. This Conus quercinus (Oak cone) protein is Conotoxin Qc5.1.